Reading from the N-terminus, the 484-residue chain is Glutamyl-tRNA(Gln) amidotransferase subunit A (484 aa).

Catalysis depends on charge relay system residues lysine 76 and serine 151. Catalysis depends on serine 175, which acts as the Acyl-ester intermediate.

It belongs to the amidase family. GatA subfamily. Heterotrimer of A, B and C subunits.

The catalysed reaction is L-glutamyl-tRNA(Gln) + L-glutamine + ATP + H2O = L-glutaminyl-tRNA(Gln) + L-glutamate + ADP + phosphate + H(+). Allows the formation of correctly charged Gln-tRNA(Gln) through the transamidation of misacylated Glu-tRNA(Gln) in organisms which lack glutaminyl-tRNA synthetase. The reaction takes place in the presence of glutamine and ATP through an activated gamma-phospho-Glu-tRNA(Gln). The chain is Glutamyl-tRNA(Gln) amidotransferase subunit A from Halorhodospira halophila (strain DSM 244 / SL1) (Ectothiorhodospira halophila (strain DSM 244 / SL1)).